A 345-amino-acid polypeptide reads, in one-letter code: Methionine import ATP-binding protein MetN 4 (345 aa).

In terms of domain architecture, ABC transporter spans 2–241 (IELTNITKTF…PQLRTTKRFV (240 aa)). ATP is bound at residue 38 to 45 (GYSGAGKS).

This sequence belongs to the ABC transporter superfamily. Methionine importer (TC 3.A.1.24) family. As to quaternary structure, the complex is composed of two ATP-binding proteins (MetN), two transmembrane proteins (MetI) and a solute-binding protein (MetQ).

The protein resides in the cell membrane. The enzyme catalyses L-methionine(out) + ATP + H2O = L-methionine(in) + ADP + phosphate + H(+). It carries out the reaction D-methionine(out) + ATP + H2O = D-methionine(in) + ADP + phosphate + H(+). Part of the ABC transporter complex MetNIQ involved in methionine import. Responsible for energy coupling to the transport system. This Oceanobacillus iheyensis (strain DSM 14371 / CIP 107618 / JCM 11309 / KCTC 3954 / HTE831) protein is Methionine import ATP-binding protein MetN 4.